A 184-amino-acid chain; its full sequence is U3 small nucleolar ribonucleoprotein protein IMP3 (184 aa).

An S4 RNA-binding domain is found at 109–175; that stretch reads RRLPTVLLKL…IKRHVLEYNE (67 aa).

This sequence belongs to the universal ribosomal protein uS4 family. As to quaternary structure, part of the small subunit (SSU) processome, composed of more than 70 proteins and the RNA chaperone small nucleolar RNA (snoRNA) U3. Component of a heterotrimeric complex containing IMP3, IMP4 and MPHOSPH10. Interacts with MPHOSPH10.

It localises to the nucleus. The protein localises to the nucleolus. Component of the 60-80S U3 small nucleolar ribonucleoprotein (U3 snoRNP). Required for the early cleavages during pre-18S ribosomal RNA processing. Part of the small subunit (SSU) processome, first precursor of the small eukaryotic ribosomal subunit. During the assembly of the SSU processome in the nucleolus, many ribosome biogenesis factors, an RNA chaperone and ribosomal proteins associate with the nascent pre-rRNA and work in concert to generate RNA folding, modifications, rearrangements and cleavage as well as targeted degradation of pre-ribosomal RNA by the RNA exosome. The sequence is that of U3 small nucleolar ribonucleoprotein protein IMP3 from Homo sapiens (Human).